Here is an 836-residue protein sequence, read N- to C-terminus: Subtilisin-like protease PIMMS2 (836 aa).

Active-site charge relay system residues include D155, H222, and S414. Residues 802–836 (EKKNKYNNSVLKRNEMKSHNNSQKTPKIIPRKYSR) form a disordered region.

This sequence belongs to the peptidase S8 family.

Its subcellular location is the cell membrane. It carries out the reaction Hydrolysis of proteins with broad specificity for peptide bonds, and a preference for a large uncharged residue in P1. Hydrolyzes peptide amides.. Functionally, probable serine protease which plays a role in ookinete traversal of the mosquito host midgut epithelium. This Plasmodium berghei (strain Anka) protein is Subtilisin-like protease PIMMS2.